The sequence spans 427 residues: V-type proton ATPase subunit C 2 (427 aa).

Residues 298 to 320 (PLGNPARPAAGQTDRDRESEGEG) form a disordered region.

It belongs to the V-ATPase C subunit family. As to quaternary structure, V-ATPase is a heteromultimeric enzyme made up of two complexes: the ATP-hydrolytic V1 complex and the proton translocation V0 complex. The V1 complex consists of three catalytic AB heterodimers that form a heterohexamer, three peripheral stalks each consisting of EG heterodimers, one central rotor including subunits D and F, and the regulatory subunits C and H. The proton translocation complex V0 consists of the proton transport subunit a, a ring of proteolipid subunits c9c'', rotary subunit d, subunits e and f, and the accessory subunits ATP6AP1/Ac45 and ATP6AP2/PRR. Predominantly expressed in the lung and kidney. Isoform 1 is lung-specific while isoform 3 is a kidney-specific isoform. Isoform 1 is localized in the lamellar bodies of type II alveolar cells. Isoform 2 is strongly expressed in the cortical and medulla collecting ducts and is found in the plasma membranes of renal alpha and beta intercalated cells.

In terms of biological role, subunit of the V1 complex of vacuolar(H+)-ATPase (V-ATPase), a multisubunit enzyme composed of a peripheral complex (V1) that hydrolyzes ATP and a membrane integral complex (V0) that translocates protons. V-ATPase is responsible for acidifying and maintaining the pH of intracellular compartments and in some cell types, is targeted to the plasma membrane, where it is responsible for acidifying the extracellular environment. Subunit C is necessary for the assembly of the catalytic sector of the enzyme and is likely to have a specific function in its catalytic activity. The protein is V-type proton ATPase subunit C 2 (Atp6v1c2) of Mus musculus (Mouse).